A 410-amino-acid polypeptide reads, in one-letter code: Gamma-glutamyl phosphate reductase (410 aa).

It belongs to the gamma-glutamyl phosphate reductase family.

Its subcellular location is the cytoplasm. The catalysed reaction is L-glutamate 5-semialdehyde + phosphate + NADP(+) = L-glutamyl 5-phosphate + NADPH + H(+). It functions in the pathway amino-acid biosynthesis; L-proline biosynthesis; L-glutamate 5-semialdehyde from L-glutamate: step 2/2. In terms of biological role, catalyzes the NADPH-dependent reduction of L-glutamate 5-phosphate into L-glutamate 5-semialdehyde and phosphate. The product spontaneously undergoes cyclization to form 1-pyrroline-5-carboxylate. This is Gamma-glutamyl phosphate reductase from Campylobacter jejuni subsp. jejuni serotype O:23/36 (strain 81-176).